A 156-amino-acid chain; its full sequence is Ribosomal RNA large subunit methyltransferase H (156 aa).

Residues L72, G104, and 123-128 contribute to the S-adenosyl-L-methionine site; that span reads LSEMTL.

This sequence belongs to the RNA methyltransferase RlmH family. Homodimer.

The protein localises to the cytoplasm. The catalysed reaction is pseudouridine(1915) in 23S rRNA + S-adenosyl-L-methionine = N(3)-methylpseudouridine(1915) in 23S rRNA + S-adenosyl-L-homocysteine + H(+). Its function is as follows. Specifically methylates the pseudouridine at position 1915 (m3Psi1915) in 23S rRNA. In Syntrophotalea carbinolica (strain DSM 2380 / NBRC 103641 / GraBd1) (Pelobacter carbinolicus), this protein is Ribosomal RNA large subunit methyltransferase H.